The following is a 1457-amino-acid chain: NBPF family member NBPF12 (1457 aa).

Positions 75–119 (RQFKEEKLAEQLKQAEELRQYKVLVHSQERELTQLREKLREGRDA) form a coiled coil. Residues 162-200 (LSPENDEDEDEDVQVEEDEKVLESSAPREVQKAEESKVP) are disordered. Acidic residues predominate over residues 165–181 (ENDEDEDEDVQVEEDEK). The Olduvai 1 domain maps to 165–259 (ENDEDEDEDV…ECQDALNILP (95 aa)). The span at 190-200 (EVQKAEESKVP) shows a compositional bias: basic and acidic residues. Positions 339–390 (KSMLRNELQFKEEKLAEQLKQAEELRQYKVLVHSQERELTQLREKLREGRDA) form a coiled coil. Positions 432 to 472 (KLSPENDEDEDEDVQVEEDEKVLESSSPREMQKAEESKVPE) are disordered. Acidic residues predominate over residues 436–452 (ENDEDEDEDVQVEEDEK). The Olduvai 2 domain maps to 436–530 (ENDEDEDEDV…ECQDALNILP (95 aa)). The segment covering 461-472 (EMQKAEESKVPE) has biased composition (basic and acidic residues). The stretch at 610–661 (KSMLRNELQFKEEKLAEQLKQAEELRQYKVLVHSQERELTQLREKLREGRDA) forms a coiled coil. 9 Olduvai domains span residues 707-799 (ENDN…HIIP), 800-871 (ENES…VDIG), 872-963 (RHRW…PSCP), 966-1021 (SREL…LDVD), 1022-1114 (RIKK…RSKK), 1115-1207 (KRRR…PSCP), 1210-1265 (SREL…LDVD), 1266-1358 (RIKK…RSKK), and 1359-1457 (KRRR…IFPQ). Disordered stretches follow at residues 721 to 746 (AEKVQKSSSPREMQKAEEKEVPEDSL) and 791 to 838 (WEDA…GYST). 2 stretches are compositionally biased toward acidic residues: residues 801 to 810 (NESDDEEEEE) and 821 to 833 (ESEEEEVPQESWD). The segment at 1100–1139 (KKGKGKKRRGRRSKKKRRRGRKEGEEDQNPPCPRLSRELL) is disordered. The span at 1102-1120 (GKGKKRRGRRSKKKRRRGR) shows a compositional bias: basic residues. The interval 1344-1378 (KKGKGKKRRGRRSKKKRRRGRKEGEEDQNPPCPRL) is disordered. A compositionally biased stretch (basic residues) spans 1346–1364 (GKGKKRRGRRSKKKRRRGR).

Belongs to the NBPF family. In terms of tissue distribution, widely expressed with highest levels in brain, ovary, mammary gland, skin and adipose tissue. Also expressed in testis. Detected in a number of tumors including osteosarcoma, mammary carcinoma and hepatocellular carcinoma.

It is found in the cytoplasm. This is NBPF family member NBPF12 from Homo sapiens (Human).